Consider the following 515-residue polypeptide: UPF0053 protein BUsg_314 (515 aa).

The next 7 helical transmembrane spans lie at 14–34 (LTLVVLEVVLGIDNLIFVAIL), 49–69 (IGLGLALIMRLALLSLISWVV), 79–99 (NFFSLSIRDLILLIGGLFLLF), 125–145 (FWAVVIQIVVLDAVFSLDAII), 150–170 (MVNQLLIMMIAVVLATILMLL), 185–205 (VVVLCLSFLLMIGFSLVAEAL), and 207–227 (FYIPKGYLYAAIGFSILIEIF). CBS domains lie at 309 to 368 (MTPR…NIDV) and 372 to 432 (ASQI…DADE).

It belongs to the UPF0053 family.

It is found in the cell membrane. The polypeptide is UPF0053 protein BUsg_314 (Buchnera aphidicola subsp. Schizaphis graminum (strain Sg)).